A 442-amino-acid chain; its full sequence is Elongation factor 1-gamma (442 aa).

Residues 2–87 (AAGTLYTYPE…YLSNDVLRGS (86 aa)) enclose the GST N-terminal domain. The 129-residue stretch at 88-216 (TPQASAQVLQ…VKLCEKMAQF (129 aa)) folds into the GST C-terminal domain. Composition is skewed to basic and acidic residues over residues 227–242 (KKEA…KEGG) and 249–263 (QEKK…KAAP). The segment at 227-273 (KKEAPIKKEKGGKEGGKQQPQQQEKKEKKKEEKKAAPAEEEMDECEA) is disordered. In terms of domain architecture, EF-1-gamma C-terminal spans 281–442 (AKDPFAHLPK…KPFNQGKIFK (162 aa)).

In terms of assembly, EF-1 is composed of four subunits: alpha, beta, delta, and gamma.

Functionally, probably plays a role in anchoring the complex to other cellular components. The polypeptide is Elongation factor 1-gamma (eef1g) (Danio rerio (Zebrafish)).